Here is a 173-residue protein sequence, read N- to C-terminus: Cytochrome c-type biogenesis protein CcmE (173 aa).

At 1–8 (MNPRRKSR) the chain is on the cytoplasmic side. Residues 9–29 (FKLVIFVVLGIAIASGLMLYA) form a helical; Signal-anchor for type II membrane protein membrane-spanning segment. The Periplasmic portion of the chain corresponds to 30 to 173 (LRQNIDLFYT…RDRQEKEGAK (144 aa)). The heme site is built by His-131 and Tyr-135. The tract at residues 139 to 173 (ELGEKMQKVHKPMGIKAADLKGESERDRQEKEGAK) is disordered. Over residues 156-173 (ADLKGESERDRQEKEGAK) the composition is skewed to basic and acidic residues.

This sequence belongs to the CcmE/CycJ family.

The protein localises to the cell inner membrane. Functionally, heme chaperone required for the biogenesis of c-type cytochromes. Transiently binds heme delivered by CcmC and transfers the heme to apo-cytochromes in a process facilitated by CcmF and CcmH. In Haemophilus influenzae (strain 86-028NP), this protein is Cytochrome c-type biogenesis protein CcmE.